The primary structure comprises 451 residues: Probable glycine dehydrogenase (decarboxylating) subunit 1 (451 aa).

Belongs to the GcvP family. N-terminal subunit subfamily. In terms of assembly, the glycine cleavage system is composed of four proteins: P, T, L and H. In this organism, the P 'protein' is a heterodimer of two subunits.

It carries out the reaction N(6)-[(R)-lipoyl]-L-lysyl-[glycine-cleavage complex H protein] + glycine + H(+) = N(6)-[(R)-S(8)-aminomethyldihydrolipoyl]-L-lysyl-[glycine-cleavage complex H protein] + CO2. Its function is as follows. The glycine cleavage system catalyzes the degradation of glycine. The P protein binds the alpha-amino group of glycine through its pyridoxal phosphate cofactor; CO(2) is released and the remaining methylamine moiety is then transferred to the lipoamide cofactor of the H protein. The sequence is that of Probable glycine dehydrogenase (decarboxylating) subunit 1 from Thioalkalivibrio sulfidiphilus (strain HL-EbGR7).